A 274-amino-acid chain; its full sequence is Homeobox-leucine zipper protein HAT9 (274 aa).

Residues 64–74 (SSHSGVSSFSS) are compositionally biased toward low complexity. The interval 64–96 (SSHSGVSSFSSGRVVKRERDGGEESPEEEEMTE) is disordered. The homeobox DNA-binding region spans 110–169 (SARKKLRLTKQQSALLEESFKDHSTLNPKQKQVLARQLNLRPRQVEVWFQNRRARTKLKQ). The segment at 177–198 (LKKCCETLADENIRLQKEIQEL) is leucine-zipper.

It belongs to the HD-ZIP homeobox family. Class II subfamily.

The protein localises to the nucleus. In terms of biological role, probable transcription factor. The chain is Homeobox-leucine zipper protein HAT9 (HAT9) from Arabidopsis thaliana (Mouse-ear cress).